Here is a 559-residue protein sequence, read N- to C-terminus: Thermosome subunit alpha (559 aa).

The span at 536–552 shows a compositional bias: basic and acidic residues; it reads SGEKKGEKKEGGEEEKS. A disordered region spans residues 536-559; that stretch reads SGEKKGEKKEGGEEEKSSTPSSLE.

It belongs to the TCP-1 chaperonin family. In terms of assembly, forms a Heterooligomeric complex of two stacked nine-membered rings; one of alpha and the other of beta subunits.

Its function is as follows. Molecular chaperone; binds unfolded polypeptides in vitro, and has a weak ATPase activity. The sequence is that of Thermosome subunit alpha (thsA) from Sulfurisphaera tokodaii (strain DSM 16993 / JCM 10545 / NBRC 100140 / 7) (Sulfolobus tokodaii).